Consider the following 784-residue polypeptide: Lon protease (784 aa).

Residues 6-207 form the Lon N-terminal domain; sequence LPLMALRDMV…TVITTLTSNI (202 aa). An ATP-binding site is contributed by 356-363; sequence GPPGVGKT. The region spanning 592-773 is the Lon proteolytic domain; that stretch reads EDQIGSTTGL…DQVLKHALVE (182 aa). Active-site residues include Ser679 and Lys722.

The protein belongs to the peptidase S16 family. In terms of assembly, homohexamer. Organized in a ring with a central cavity.

The protein resides in the cytoplasm. It catalyses the reaction Hydrolysis of proteins in presence of ATP.. Its function is as follows. ATP-dependent serine protease that mediates the selective degradation of mutant and abnormal proteins as well as certain short-lived regulatory proteins. Required for cellular homeostasis and for survival from DNA damage and developmental changes induced by stress. Degrades polypeptides processively to yield small peptide fragments that are 5 to 10 amino acids long. Binds to DNA in a double-stranded, site-specific manner. The polypeptide is Lon protease (Rickettsia typhi (strain ATCC VR-144 / Wilmington)).